The primary structure comprises 116 residues: Large ribosomal subunit protein bL20 (116 aa).

The protein belongs to the bacterial ribosomal protein bL20 family.

Functionally, binds directly to 23S ribosomal RNA and is necessary for the in vitro assembly process of the 50S ribosomal subunit. It is not involved in the protein synthesizing functions of that subunit. This Helicobacter pylori (strain P12) protein is Large ribosomal subunit protein bL20.